We begin with the raw amino-acid sequence, 539 residues long: Chaperonin GroEL (539 aa).

ATP contacts are provided by residues 29–32, 86–90, G413, 476–478, and D492; these read TIGP, DGTTT, and NAA.

It belongs to the chaperonin (HSP60) family. Forms a cylinder of 14 subunits composed of two heptameric rings stacked back-to-back. Interacts with the co-chaperonin GroES.

The protein resides in the cytoplasm. The catalysed reaction is ATP + H2O + a folded polypeptide = ADP + phosphate + an unfolded polypeptide.. In terms of biological role, together with its co-chaperonin GroES, plays an essential role in assisting protein folding. The GroEL-GroES system forms a nano-cage that allows encapsulation of the non-native substrate proteins and provides a physical environment optimized to promote and accelerate protein folding. The polypeptide is Chaperonin GroEL (Staphylococcus epidermidis (strain ATCC 12228 / FDA PCI 1200)).